The primary structure comprises 261 residues: Cathepsin G (261 aa).

The N-terminal stretch at 1 to 18 (MQPLLLLLTFILLQGDEA) is a signal peptide. Positions 19–20 (GK) are cleaved as a propeptide — activation peptide. Residues 21 to 25 (IIGGR) are important for antimicrobial activity. In terms of domain architecture, Peptidase S1 spans 21-243 (IIGGREARPH…FMPWIKRTMR (223 aa)). C49 and C65 form a disulfide bridge. Residue H64 is the Charge relay system of the active site. An N-linked (GlcNAc...) asparagine glycan is attached at N71. The important for antimicrobial activity stretch occupies residues 97–111 (HPDYNPQNIRNDIML). Catalysis depends on D108, which acts as the Charge relay system. Intrachain disulfides connect C142-C207 and C172-C186. The active-site Charge relay system is the S201.

The protein belongs to the peptidase S1 family. In adult, detected only in bone marrow where expression is restricted to a small population of early myeloid cells.

The protein resides in the cell membrane. Its subcellular location is the cytoplasmic granule. The protein localises to the secreted. It is found in the cytoplasm. It localises to the cytosol. The protein resides in the lysosome. Its subcellular location is the nucleus. It carries out the reaction Specificity similar to chymotrypsin C.. With respect to regulation, inhibited by chymostatin, phenylmethanesulfonyl fluoride and diisopropyl fluorophosphate. Its function is as follows. Serine protease with trypsin- and chymotrypsin-like specificity. Also displays antibacterial activity against Gram-negative and Gram-positive bacteria independent of its protease activity. Prefers Phe and Tyr residues in the P1 position of substrates but also cleaves efficiently after Trp and Leu. Shows a preference for negatively charged amino acids in the P2' position and for aliphatic amino acids both upstream and downstream of the cleavage site. Required for recruitment and activation of platelets which is mediated by the F2RL3/PAR4 platelet receptor. Binds reversibly to and stimulates B cells and CD4(+) and CD8(+) T cells. Also binds reversibly to natural killer (NK) cells and enhances NK cell cytotoxicity through its protease activity. Cleaves complement C3. Cleaves vimentin. Cleaves thrombin receptor F2R/PAR1. Cleaves the synovial mucin-type protein PRG4/lubricin. Cleaves and activates IL36G which promotes expression of chemokines CXCL1 and CXLC8 in keratinocytes. Cleaves IL33 into mature forms which have greater activity than the unprocessed form. Cleaves coagulation factor F8 to produce a partially activated form. Also cleaves and activates coagulation factor F10. Cleaves leukocyte cell surface protein SPN/CD43 to release its extracellular domain and trigger its intramembrane proteolysis by gamma-secretase, releasing the CD43 cytoplasmic tail chain (CD43-ct) which translocates to the nucleus. During apoptosis, cleaves SMARCA2/BRM to produce a 160 kDa cleavage product which localizes to the cytosol. Cleaves MBP in B cell lysosomes at '221-Phe-|-Lys-222', degrading the major immunogenic MBP epitope and preventing the activation of MBP-specific autoreactive T cells. Cleaves annexin ANXA1 and antimicrobial peptide CAMP to produce peptides which act on neutrophil N-formyl peptide receptors to enhance the release of CXCL2. Acts as a ligand for the N-formyl peptide receptor FPR1, enhancing phagocyte chemotaxis. Has antibacterial activity against the Gram-negative bacteria N.gonorrhoeae and P.aeruginosa. Likely to act against N.gonorrhoeae by interacting with N.gonorrhoeae penA/PBP2. Exhibits potent antimicrobial activity against the Gram-positive bacterium L.monocytogenes. Has antibacterial activity against the Gram-positive bacterium S.aureus and degrades S.aureus biofilms, allowing polymorphonuclear leukocytes to penetrate the biofilm and phagocytose bacteria. Has antibacterial activity against M.tuberculosis. Induces platelet aggregation which is strongly potentiated in the presence of ELANE. The chain is Cathepsin G (Ctsg) from Mus musculus (Mouse).